The chain runs to 361 residues: Peptide chain release factor 1 (361 aa).

An N5-methylglutamine modification is found at Q237.

This sequence belongs to the prokaryotic/mitochondrial release factor family. Methylated by PrmC. Methylation increases the termination efficiency of RF1.

The protein localises to the cytoplasm. In terms of biological role, peptide chain release factor 1 directs the termination of translation in response to the peptide chain termination codons UAG and UAA. This Alcanivorax borkumensis (strain ATCC 700651 / DSM 11573 / NCIMB 13689 / SK2) protein is Peptide chain release factor 1.